A 219-amino-acid polypeptide reads, in one-letter code: Transmembrane emp24 domain-containing protein 10 (219 aa).

A signal peptide spans 1 to 31 (MSGSSGPLSWPGPRPCALLFLLLLGPSSVLA). The tract at residues 1–142 (MSGSSGPLSW…KNYEEIAKVE (142 aa)) is required for interaction with STX17. The Lumenal segment spans residues 32–185 (ISFHLPVNSR…RDTNESTNTR (154 aa)). In terms of domain architecture, GOLD spans 41–193 (RKCLREEIHK…TRVLYFSIFS (153 aa)). Positions 147 to 178 (LEVELRRLEDLSESIVNDFAYMKKREEEMRDT) are required for TMED10 and TMED2 cis-Golgi network localization. Dimethylated arginine occurs at positions 171 and 176. A glycan (N-linked (GlcNAc...) asparagine) is linked at Asn179. The helical transmembrane segment at 186–206 (VLYFSIFSMLCLIGLATWQVF) threads the bilayer. The segment at 204 to 219 (QVFYLRRFFKAKKLIE) is interaction with COPG1. The Cytoplasmic segment spans residues 207 to 219 (YLRRFFKAKKLIE). Positions 207–219 (YLRRFFKAKKLIE) are interaction with ARF1 and IL1B. Positions 211–212 (FF) match the COPII vesicle coat-binding motif. Positions 211 to 219 (FFKAKKLIE) match the COPI vesicle coat-binding motif.

Belongs to the EMP24/GP25L family. In terms of assembly, predominantly dimeric and to a lesser extent monomeric in the ER. Monomer and dimer in ERGIC and cis-Golgi network. Forms homooligomer (via GOLD domain); the assembly is promoted by direct binding with leaderless cargos and may form a protein channel that facilitates cargo entry into the ERGIC. Forms heterooligomeric complexes with other members of the p24 family such as TMED2, TMED7 and TMED9. Interacts (via GOLD domain) with TMED2 (via GOLD domain); the complex is required for export of TMED10 from the ER to the cis-Golgi network; the complex is proposed to be involved in cis-Golgi network dynamics and / or biogenesis. Associates with the COPI vesicle coat subunits (coatomer). Tetramerization of the cytoplasmic domain at the Golgi membrane in vitro; the complex is proposed to interact with COPI coatomer and induce budding of the vesicles. Interacts with COPG1; the interaction involves TMED10 homodimer. Interacts with ARF1 (GDP-bound); the interaction probably involves a TMED10 oligomer. Interacts with SEC23A, SEC24B, SEC24C and SEC24D components of the coat protein complex II/COPII, indicative of an association of TMED10 with the COPII vesicle coat. Interacts with CD59. Interacts with MPPE1/PGAP5; the complex might recruit and sort GPI-anchored proteins to the ER-exit site, or the interaction might lead to recycling of PGAP5 between the ER and the Golgi. Interacts with F2LR1/PAR2. Interacts with KDELR2/ERD2; the interaction is disrupted by KDELR2 ligand. Found in a complex composed at least of SURF4, TMED2 and TMED10. Associates with the presenilin-dependent gamma-secretase complex. Interacts with STX17; the interaction is direct. Interacts with IL-1; the interaction is direct. Interacts with RAB21 (active GTP-bound form); the interaction is indirect and regulates TMED10 abundance and localization at the Golgi.

It localises to the endoplasmic reticulum membrane. The protein resides in the endoplasmic reticulum-Golgi intermediate compartment membrane. It is found in the golgi apparatus membrane. Its subcellular location is the golgi apparatus. The protein localises to the cis-Golgi network membrane. It localises to the trans-Golgi network membrane. The protein resides in the cytoplasmic vesicle. It is found in the secretory vesicle membrane. Its subcellular location is the cell membrane. The protein localises to the melanosome. Functionally, cargo receptor involved in protein vesicular trafficking and quality control in the endoplasmic reticulum (ER) and Golgi. The p24 protein family is a group of transmembrane proteins that bind coat protein complex I/COPI and coat protein complex II/COPII involved in vesicular trafficking between the membranes. Acts at the lumenal side for incorporation of secretory cargo molecules into transport vesicles and involved in vesicle coat formation at the cytoplasmic side. Mainly functions in the early secretory pathway and cycles between the ER, ER-Golgi intermediate compartment (ERGIC) and Golgi, mediating cargo transport through COPI and COPII-coated vesicles. In COPII vesicle-mediated anterograde transport, involved in the transport of GPI-anchored proteins by acting together with TMED2 as their cargo receptor; the function specifically implies SEC24C and SEC24D of the COPII vesicle coat and lipid raft-like microdomains of the ER. Recognizes GPI anchors structural remodeled in the ER by the GPI inositol-deacylase/PGAP1 and the metallophosphoesterase MPPE1/PGAP5. In COPI vesicle-mediated retrograde transport, involved in the biogenesis of COPI vesicles and vesicle coat recruitment. Involved in trafficking of amyloid beta A4 protein and soluble APP-beta release (independent from the modulation of gamma-secretase activity). Involved in the KDELR2-mediated retrograde transport of the toxin A subunit (CTX-A-K63)together with COPI and the COOH terminus of KDELR2. On Golgi membranes, acts as a primary receptor for ARF1-GDP, a GTP-binding protein involved in COPI-vesicle formation. Increases coatomer-dependent GTPase-activating activity of ARFGAP2 which mediates the hydrolysis of ARF1-bound GTP and therefore modulates protein trafficking from the Golgi apparatus. Involved in the exocytic trafficking of G protein-coupled receptors F2LR1/PAR2 (trypsin and tryspin-like enzyme receptor), OPRM1 (opioid receptor) and P2RY4 (UTD and UDP receptor) from the Golgi to the plasma membrane, thus contributing to receptor resensitization. In addition to its cargo receptor activity, may also act as a protein channel after oligomerization, facilitating the post-translational entry of leaderless cytoplasmic cargo into the ERGIC. Involved in the translocation into ERGIC, the vesicle entry and the secretion of leaderless cargos (lacking the secretion signal sequence), including the mature form of interleukin 1/IL-1 family members, the alpha-crystallin B chain HSPB5, the carbohydrate-binding proteins galectin-1/LGALS1 and galectin-3/LGALS3, the microtubule-associated protein Tau/MAPT, and the annexin A1/ANXA1; the translocation process is dependent on cargo protein unfolding and enhanced by chaperones HSP90AB1 and HSP90B1/GRP9. Could also associates with the presenilin-dependent gamma-secretase complex in order to regulate gamma-cleavages of the amyloid beta A4 protein to yield amyloid-beta 40/Abeta40. This is Transmembrane emp24 domain-containing protein 10 (TMED10) from Mesocricetus auratus (Golden hamster).